The primary structure comprises 205 residues: Holliday junction branch migration complex subunit RuvA (205 aa).

The interval 1–64 (MIGKLKGTID…EDQLKLFGFL (64 aa)) is domain I. Positions 65 to 143 (SALEREWFRL…AFVGEMAPSI (79 aa)) are domain II. The flexible linker stretch occupies residues 144 to 153 (GLKQELGEGV). The interval 153 to 205 (VAAAPVSDAVSALTNLGYSRDQAANAVAAALKNGGEGADSARLIRLGLKELSR) is domain III.

It belongs to the RuvA family. In terms of assembly, homotetramer. Forms an RuvA(8)-RuvB(12)-Holliday junction (HJ) complex. HJ DNA is sandwiched between 2 RuvA tetramers; dsDNA enters through RuvA and exits via RuvB. An RuvB hexamer assembles on each DNA strand where it exits the tetramer. Each RuvB hexamer is contacted by two RuvA subunits (via domain III) on 2 adjacent RuvB subunits; this complex drives branch migration. In the full resolvosome a probable DNA-RuvA(4)-RuvB(12)-RuvC(2) complex forms which resolves the HJ.

Its subcellular location is the cytoplasm. In terms of biological role, the RuvA-RuvB-RuvC complex processes Holliday junction (HJ) DNA during genetic recombination and DNA repair, while the RuvA-RuvB complex plays an important role in the rescue of blocked DNA replication forks via replication fork reversal (RFR). RuvA specifically binds to HJ cruciform DNA, conferring on it an open structure. The RuvB hexamer acts as an ATP-dependent pump, pulling dsDNA into and through the RuvAB complex. HJ branch migration allows RuvC to scan DNA until it finds its consensus sequence, where it cleaves and resolves the cruciform DNA. This is Holliday junction branch migration complex subunit RuvA from Sinorhizobium medicae (strain WSM419) (Ensifer medicae).